A 413-amino-acid polypeptide reads, in one-letter code: N5-carboxyaminoimidazole ribonucleotide synthase (413 aa).

Residues 1-21 form a disordered region; it reads MKRVSEQAGNPDGNPQAHVPG. ATP is bound by residues lysine 122, lysine 162, 199–202, glutamate 207, and 289–290; these read EEKV and NE. Residues 126 to 319 enclose the ATP-grasp domain; sequence RERLAELGAP…QFEQHLRAVM (194 aa).

Belongs to the PurK/PurT family. Homodimer.

The enzyme catalyses 5-amino-1-(5-phospho-beta-D-ribosyl)imidazole + hydrogencarbonate + ATP = 5-carboxyamino-1-(5-phospho-D-ribosyl)imidazole + ADP + phosphate + 2 H(+). It participates in purine metabolism; IMP biosynthesis via de novo pathway; 5-amino-1-(5-phospho-D-ribosyl)imidazole-4-carboxylate from 5-amino-1-(5-phospho-D-ribosyl)imidazole (N5-CAIR route): step 1/2. In terms of biological role, catalyzes the ATP-dependent conversion of 5-aminoimidazole ribonucleotide (AIR) and HCO(3)(-) to N5-carboxyaminoimidazole ribonucleotide (N5-CAIR). The polypeptide is N5-carboxyaminoimidazole ribonucleotide synthase (Corynebacterium ammoniagenes (Brevibacterium ammoniagenes)).